The following is a 205-amino-acid chain: ATP phosphoribosyltransferase (205 aa).

Belongs to the ATP phosphoribosyltransferase family. Short subfamily. As to quaternary structure, heteromultimer composed of HisG and HisZ subunits.

The protein resides in the cytoplasm. The catalysed reaction is 1-(5-phospho-beta-D-ribosyl)-ATP + diphosphate = 5-phospho-alpha-D-ribose 1-diphosphate + ATP. The protein operates within amino-acid biosynthesis; L-histidine biosynthesis; L-histidine from 5-phospho-alpha-D-ribose 1-diphosphate: step 1/9. Functionally, catalyzes the condensation of ATP and 5-phosphoribose 1-diphosphate to form N'-(5'-phosphoribosyl)-ATP (PR-ATP). Has a crucial role in the pathway because the rate of histidine biosynthesis seems to be controlled primarily by regulation of HisG enzymatic activity. In Vesicomyosocius okutanii subsp. Calyptogena okutanii (strain HA), this protein is ATP phosphoribosyltransferase.